We begin with the raw amino-acid sequence, 173 residues long: Gamma-crystallin S-2 (173 aa).

2 Beta/gamma crystallin 'Greek key' domains span residues 2 to 40 and 41 to 83; these read GKIIFYEDRNFQGRNYECSSDCADLSPYFSRCNSIRVES and DWWV…RVPT. The interval 84 to 88 is connecting peptide; it reads HTQRP. Beta/gamma crystallin 'Greek key' domains follow at residues 89-129 and 130-172; these read YRMR…HVMG and AYWI…RRIM.

It belongs to the beta/gamma-crystallin family.

Functionally, crystallins are the dominant structural components of the vertebrate eye lens. The protein is Gamma-crystallin S-2 (GS-2) of Chiloscyllium indicum (Slender bamboo shark).